An 84-amino-acid polypeptide reads, in one-letter code: RQC P-site tRNA stabilizing factor (84 aa).

The 64-residue stretch at 1-64 folds into the S4 RNA-binding domain; that stretch reads MRIDKFLQSV…IEEYTILQIP (64 aa).

The protein belongs to the RqcP family. In terms of assembly, associates with stalled 50S ribosomal subunits. Binds to RqcH, 23S rRNA and the P-site tRNA. Does not require RqcH for association with 50S subunits.

Its function is as follows. Key component of the ribosome quality control system (RQC), a ribosome-associated complex that mediates the extraction of incompletely synthesized nascent chains from stalled ribosomes and their subsequent degradation. RqcH recruits Ala-charged tRNA, and with RqcP directs the elongation of stalled nascent chains on 50S ribosomal subunits, leading to non-templated C-terminal alanine extensions (Ala tail). The Ala tail promotes nascent chain degradation. RqcP is associated with the translocation-like movement of the peptidyl-tRNA from the A-site into the P-site. The chain is RQC P-site tRNA stabilizing factor from Helicobacter pylori (strain J99 / ATCC 700824) (Campylobacter pylori J99).